Reading from the N-terminus, the 494-residue chain is Alpha-amylase B (494 aa).

A signal peptide spans methionine 1–alanine 18. Residue glutamine 19 is modified to Pyrrolidone carboxylic acid. The cysteines at positions 46 and 102 are disulfide-linked. Ca(2+) is bound by residues asparagine 116, arginine 165, and aspartate 174. Cysteine 153 and cysteine 167 form a disulfide bridge. Chloride is bound at residue arginine 202. Aspartate 204 (nucleophile) is an active-site residue. Residue histidine 208 participates in Ca(2+) binding. Glutamate 241 (proton donor) is an active-site residue. 2 residues coordinate chloride: asparagine 304 and arginine 343. Cystine bridges form between cysteine 376/cysteine 382 and cysteine 448/cysteine 460.

Belongs to the glycosyl hydrolase 13 family. As to quaternary structure, monomer. The cofactor is Ca(2+). Chloride is required as a cofactor.

It catalyses the reaction Endohydrolysis of (1-&gt;4)-alpha-D-glucosidic linkages in polysaccharides containing three or more (1-&gt;4)-alpha-linked D-glucose units.. The protein is Alpha-amylase B (Amy-d) of Drosophila melanogaster (Fruit fly).